Reading from the N-terminus, the 417-residue chain is D-amino acid dehydrogenase (417 aa).

3 to 17 (VVILGSGVVGVSTAW) serves as a coordination point for FAD.

It belongs to the DadA oxidoreductase family. Requires FAD as cofactor.

The catalysed reaction is a D-alpha-amino acid + A + H2O = a 2-oxocarboxylate + AH2 + NH4(+). It participates in amino-acid degradation; D-alanine degradation; NH(3) and pyruvate from D-alanine: step 1/1. In terms of biological role, oxidative deamination of D-amino acids. In Pectobacterium atrosepticum (strain SCRI 1043 / ATCC BAA-672) (Erwinia carotovora subsp. atroseptica), this protein is D-amino acid dehydrogenase.